The primary structure comprises 515 residues: Meiotically up-regulated gene 68 protein (515 aa).

The disordered stretch occupies residues 165–204; the sequence is LHSIESERNESSLSLDSGESEKKSEEDNGNGEQNYIPEQY.

In terms of biological role, has a role in meiosis. In Schizosaccharomyces pombe (strain 972 / ATCC 24843) (Fission yeast), this protein is Meiotically up-regulated gene 68 protein (mug68).